We begin with the raw amino-acid sequence, 442 residues long: 3-isopropylmalate dehydratase large subunit (442 aa).

[4Fe-4S] cluster is bound by residues C347, C407, and C410.

The protein belongs to the aconitase/IPM isomerase family. LeuC type 1 subfamily. Heterodimer of LeuC and LeuD. The cofactor is [4Fe-4S] cluster.

It catalyses the reaction (2R,3S)-3-isopropylmalate = (2S)-2-isopropylmalate. It functions in the pathway amino-acid biosynthesis; L-leucine biosynthesis; L-leucine from 3-methyl-2-oxobutanoate: step 2/4. In terms of biological role, catalyzes the isomerization between 2-isopropylmalate and 3-isopropylmalate, via the formation of 2-isopropylmaleate. The protein is 3-isopropylmalate dehydratase large subunit of Buchnera aphidicola subsp. Uroleucon helianthicola.